A 291-amino-acid polypeptide reads, in one-letter code: Methionine aminopeptidase (291 aa).

His118 lines the substrate pocket. A divalent metal cation-binding residues include Asp135, Asp146, and His209. His216 is a binding site for substrate. Residues Glu241 and Glu273 each coordinate a divalent metal cation.

The protein belongs to the peptidase M24A family. Methionine aminopeptidase type 1 subfamily. In terms of assembly, monomer. The cofactor is Co(2+). Zn(2+) serves as cofactor. Mn(2+) is required as a cofactor. Requires Fe(2+) as cofactor.

It carries out the reaction Release of N-terminal amino acids, preferentially methionine, from peptides and arylamides.. Its function is as follows. Removes the N-terminal methionine from nascent proteins. The N-terminal methionine is often cleaved when the second residue in the primary sequence is small and uncharged (Met-Ala-, Cys, Gly, Pro, Ser, Thr, or Val). Requires deformylation of the N(alpha)-formylated initiator methionine before it can be hydrolyzed. The protein is Methionine aminopeptidase of Chlamydia trachomatis serovar D (strain ATCC VR-885 / DSM 19411 / UW-3/Cx).